The chain runs to 637 residues: Probable potassium transport system protein Kup (637 aa).

A run of 12 helical transmembrane segments spans residues 24 to 44, 64 to 84, 113 to 133, 151 to 171, 182 to 202, 225 to 245, 261 to 281, 290 to 310, 351 to 371, 381 to 401, 409 to 429, and 433 to 453; these read LAIA…LYAL, VISL…LLFV, AGAL…DAVI, PHLS…LFWI, LFGP…VYHI, LLQA…AEAL, AYGL…ALLI, PFFL…STVA, IYVP…VIGF, YGIA…VVMV, LLVG…FGAN, and VAQG…LLMT.

The protein belongs to the HAK/KUP transporter (TC 2.A.72) family.

The protein resides in the cell inner membrane. The enzyme catalyses K(+)(in) + H(+)(in) = K(+)(out) + H(+)(out). Transport of potassium into the cell. Likely operates as a K(+):H(+) symporter. The polypeptide is Probable potassium transport system protein Kup (Burkholderia ambifaria (strain MC40-6)).